A 402-amino-acid chain; its full sequence is Zinc finger CCHC domain-containing protein 12 (402 aa).

The disordered stretch occupies residues 1 to 20 (MASILSRLGSSRGQNSPLPP). The segment at 346–363 (IHCSHCGEEGHSKETCDN) adopts a CCHC-type zinc-finger fold. The interval 383 to 402 (HAEERARGAPGEPIGLSEPQ) is disordered.

This sequence belongs to the ZCCHC12 family. Interacts with SMAD1 and CREB-binding protein (CBP). Forms a protein-DNA complex through its association with SMAD1. In terms of tissue distribution, in embryonic brains expression is restricted to the ventral region of the forebrain, including the septum, amygdala, caudal putamen, and in the basal-forebrain cholinergic neurons. In adults, expressed in the brain, and at low levels in the testis.

Its function is as follows. Transcriptional coactivator in the bone morphogenetic protein (BMP)-signaling pathway. It positively modulates BMP signaling by interacting with SMAD1 and associating with CBP in the transcription complex. It contributes to the BMP-induced enhancement of cholinergic-neuron-specific gene expression. This Mus musculus (Mouse) protein is Zinc finger CCHC domain-containing protein 12 (Zcchc12).